A 497-amino-acid chain; its full sequence is Chlorophyllide reductase 52.5 kDa chain (497 aa).

A run of 3 helical transmembrane segments spans residues 65 to 82, 126 to 142, and 216 to 233; these read VATV…LSFI, AIVV…GVPL, and MVIG…GPTV.

The protein belongs to the BchN/ChlN family. In terms of assembly, chlorophyllide reductase is composed of three subunits; BchX, BchY and BchZ. Forms a heterodimer of one BchY and one BchZ subunit.

Its subcellular location is the cell membrane. It carries out the reaction 3-deacetyl-3-vinylbacteriochlorophyllide a + 2 oxidized [2Fe-2S]-[ferredoxin] + ADP + phosphate = chlorophyllide a + 2 reduced [2Fe-2S]-[ferredoxin] + ATP + H2O + H(+). It catalyses the reaction bacteriochlorophyllide a + 2 oxidized [2Fe-2S]-[ferredoxin] + ADP + phosphate = 3-acetyl-3-devinylchlorophyllide a + 2 reduced [2Fe-2S]-[ferredoxin] + ATP + H2O + H(+). The catalysed reaction is 3-deacetyl-3-(1-hydroxyethyl)bacteriochlorophyllide a + 2 oxidized [2Fe-2S]-[ferredoxin] + ADP + phosphate = 3-devinyl-3-(1-hydroxyethyl)chlorophyllide a + 2 reduced [2Fe-2S]-[ferredoxin] + ATP + H2O + H(+). It participates in porphyrin-containing compound metabolism; bacteriochlorophyll biosynthesis (light-independent). In terms of biological role, converts chlorophylls (Chl) into bacteriochlorophylls (BChl) by reducing ring B of the tetrapyrrole. The sequence is that of Chlorophyllide reductase 52.5 kDa chain (bchY) from Rhodobacter capsulatus (strain ATCC BAA-309 / NBRC 16581 / SB1003).